We begin with the raw amino-acid sequence, 407 residues long: MIPLLFVVYVVAVKVFKKTTPNGKVTVYLGKRDFIDHLDHVDPIDGIVVVDNDYLRGRKVFGQLTTTYRYGREEDEVMGLKFTKEMVLAKEQIVPQTKEKMELTPIQERLMKKLGPNAFPFTFHFPASSPSSVTLQPGDDDQGKPLGVEYSVKTWVGDHAEEKGHKRSAVTLAIKKLQYAPPTRGRRLPSSLVSKGFTFSQGKINLEVTLDREIYYHGEKLAANVIINNNSRKTVKNIKVYVVQHCEVTMVNAQFSRHVASLETREGCPITPGASFTKVFYLVPCAASNKDRYGIALDGYLKDDDVNLASSTLVSEGKNTTDAIGIVISYSLRVKLNCGTLGGELQTDVPFKLLHPAPGTAEREKAQAIKKMKSIERTRYENSCYAADDDDNIVFEDFARLRLNEPE.

Belongs to the arrestin family.

The sequence is that of Arrestin homolog from Locusta migratoria (Migratory locust).